A 147-amino-acid polypeptide reads, in one-letter code: Ubiquitin-conjugating enzyme E2 4 (147 aa).

In terms of domain architecture, UBC core spans Met1–Ile147. Cys85 functions as the Glycyl thioester intermediate in the catalytic mechanism.

This sequence belongs to the ubiquitin-conjugating enzyme family. Interacts with the E1 ubiquitin-activating enzyme ptr3 and E3 ubiquitin-protein ligase pub2.

It carries out the reaction S-ubiquitinyl-[E1 ubiquitin-activating enzyme]-L-cysteine + [E2 ubiquitin-conjugating enzyme]-L-cysteine = [E1 ubiquitin-activating enzyme]-L-cysteine + S-ubiquitinyl-[E2 ubiquitin-conjugating enzyme]-L-cysteine.. Its pathway is protein modification; protein ubiquitination. E2 ubiquitin-conjugating enzyme that catalyzes the covalent attachment of ubiquitin to other proteins. Mediates the selective degradation of short-lived and abnormal proteins. Mediates ubiquitination of pex5. In Schizosaccharomyces pombe (strain 972 / ATCC 24843) (Fission yeast), this protein is Ubiquitin-conjugating enzyme E2 4 (ubc4).